The following is a 302-amino-acid chain: N-acetyl-D-glucosamine kinase (302 aa).

Residues 4–11 (GFDVGGTK) and 133–140 (GFGGGFIY) each bind ATP. Residues histidine 157, cysteine 177, cysteine 179, and cysteine 184 each coordinate Zn(2+).

The protein belongs to the ROK (NagC/XylR) family. NagK subfamily.

The catalysed reaction is N-acetyl-D-glucosamine + ATP = N-acetyl-D-glucosamine 6-phosphate + ADP + H(+). It participates in cell wall biogenesis; peptidoglycan recycling. Functionally, catalyzes the phosphorylation of N-acetyl-D-glucosamine (GlcNAc) derived from cell-wall degradation, yielding GlcNAc-6-P. The protein is N-acetyl-D-glucosamine kinase of Vibrio parahaemolyticus serotype O3:K6 (strain RIMD 2210633).